The following is a 182-amino-acid chain: MEIKFTIKQVVAVGIGAALFVVIGMINIPTPVPNTSIQLQYAVQALLSIIFGPIIGLLVGLIGHAIKDSLVGYGLWWTWIIASGLFGLVVGLFRKYVRVINSVFDWKDILIFNLIQLLANALVWGVLAPLGDVVIYQEAAEKVFAQGIVAGIANGVSVAIAGTLLLLAYAGTQTRAGSLKKD.

A run of 5 helical transmembrane segments spans residues 10–30 (VVAV…NIPT), 46–66 (LLSI…GHAI), 73–93 (YGLW…VGLF), 109–129 (ILIF…VLAP), and 148–168 (IVAG…LLLA).

The protein belongs to the UPF0397 family.

The protein localises to the cell membrane. This chain is UPF0397 protein SPG_0438, found in Streptococcus pneumoniae serotype 19F (strain G54).